The chain runs to 158 residues: Probable cyclic pyranopterin monophosphate synthase (158 aa).

Substrate contacts are provided by residues 78–80 (MCH) and 114–115 (ME). The active site involves Asp-129.

The protein belongs to the MoaC family. In terms of assembly, homohexamer; trimer of dimers.

The enzyme catalyses (8S)-3',8-cyclo-7,8-dihydroguanosine 5'-triphosphate = cyclic pyranopterin phosphate + diphosphate. Its pathway is cofactor biosynthesis; molybdopterin biosynthesis. In terms of biological role, catalyzes the conversion of (8S)-3',8-cyclo-7,8-dihydroguanosine 5'-triphosphate to cyclic pyranopterin monophosphate (cPMP). This Methanosarcina acetivorans (strain ATCC 35395 / DSM 2834 / JCM 12185 / C2A) protein is Probable cyclic pyranopterin monophosphate synthase.